A 337-amino-acid chain; its full sequence is 4-hydroxyproline 2-epimerase (337 aa).

The active-site Proton acceptor is the Cys-91. Substrate contacts are provided by residues 92–93, Asp-252, and 257–258; these read GH and GT.

It belongs to the proline racemase family.

The enzyme catalyses trans-4-hydroxy-L-proline = cis-4-hydroxy-D-proline. In terms of biological role, catalyzes the epimerization of trans-4-hydroxy-L-proline (t4LHyp) to cis-4-hydroxy-D-proline (c4DHyp). Is likely involved in a degradation pathway that converts t4LHyp to alpha-ketoglutarate. Displays no proline racemase activity. This Cereibacter sphaeroides (strain ATCC 17029 / ATH 2.4.9) (Rhodobacter sphaeroides) protein is 4-hydroxyproline 2-epimerase.